The primary structure comprises 424 residues: Cyclin-dependent kinase D-1 (424 aa).

The 281-residue stretch at 19-299 folds into the Protein kinase domain; it reads YLKREVLGEG…AQQALEHRYF (281 aa). Residues 25-33 and K48 contribute to the ATP site; that span reads LGEGTYGVV. Residue T29 is modified to Phosphothreonine. Y30 is modified (phosphotyrosine). The active-site Proton acceptor is the D141. S168 carries the phosphoserine modification. A Phosphothreonine modification is found at T174. Disordered regions lie at residues 303–337 and 359–424; these read PAPT…PVVL and ADRT…GYTE. The span at 359 to 374 shows a compositional bias: basic and acidic residues; that stretch reads ADRTEEHPSGARHMDD.

It belongs to the protein kinase superfamily. CMGC Ser/Thr protein kinase family. CDC2/CDKX subfamily.

It is found in the nucleus. The catalysed reaction is L-seryl-[protein] + ATP = O-phospho-L-seryl-[protein] + ADP + H(+). The enzyme catalyses L-threonyl-[protein] + ATP = O-phospho-L-threonyl-[protein] + ADP + H(+). It catalyses the reaction [DNA-directed RNA polymerase] + ATP = phospho-[DNA-directed RNA polymerase] + ADP + H(+). The polypeptide is Cyclin-dependent kinase D-1 (CDKD-1) (Oryza sativa subsp. indica (Rice)).